An 865-amino-acid chain; its full sequence is Protein translocase subunit SecA (865 aa).

ATP contacts are provided by residues glutamine 93, 111–115 (GEGKT), and aspartate 501. Residues cysteine 841, cysteine 843, cysteine 852, and cysteine 853 each coordinate Zn(2+).

Belongs to the SecA family. In terms of assembly, monomer and homodimer. Part of the essential Sec protein translocation apparatus which comprises SecA, SecYEG and auxiliary proteins SecDF-YajC and YidC. Requires Zn(2+) as cofactor.

The protein localises to the cell inner membrane. The protein resides in the cytoplasm. The catalysed reaction is ATP + H2O + cellular proteinSide 1 = ADP + phosphate + cellular proteinSide 2.. Functionally, part of the Sec protein translocase complex. Interacts with the SecYEG preprotein conducting channel. Has a central role in coupling the hydrolysis of ATP to the transfer of proteins into and across the cell membrane, serving as an ATP-driven molecular motor driving the stepwise translocation of polypeptide chains across the membrane. This chain is Protein translocase subunit SecA, found in Helicobacter pylori (strain HPAG1).